The primary structure comprises 797 residues: Protocadherin-3 (797 aa).

Positions 1-30 (METALAKIPQQRQVFFLTILSLLWKSSSEA) are cleaved as a signal peptide. Topologically, residues 31 to 691 (IRYSMPEETE…DNYDVLTLYL (661 aa)) are extracellular. Cadherin domains follow at residues 35–133 (MPEE…SPEF), 138–242 (MLLT…SPQF), 247–346 (YKVQ…APEL), 351–450 (LTVL…APAF), and 455–560 (YTMF…APFV). Residues N169, N276, and N417 are each glycosylated (N-linked (GlcNAc...) asparagine). Residue N566 is glycosylated (N-linked (GlcNAc...) asparagine). Positions 567–670 (ASAPCTELLP…VVDGFSQPYL (104 aa)) constitute a Cadherin 6 domain. A helical transmembrane segment spans residues 692 to 712 (VIALASVSSLFLLSVVLFVGV). At 713–797 (RLCRRAREAS…AVVHNSVGFY (85 aa)) the chain is on the cytoplasmic side.

Expressed in brain.

The protein localises to the cell membrane. Its function is as follows. Potential calcium-dependent cell-adhesion protein. May be involved in the establishment and maintenance of specific neuronal connections in the brain. In Rattus norvegicus (Rat), this protein is Protocadherin-3 (Pcdh3).